A 611-amino-acid chain; its full sequence is Conglutin beta 1 (611 aa).

The signal sequence occupies residues 1–30; sequence MAKMRVRLPMLILLLGVVFLLAASIGIAYG. Basic and acidic residues-rich tracts occupy residues 32-82 and 130-141; these read KDFT…RSQS and SRREEREEREQE. 2 disordered regions span residues 32–194 and 384–407; these read KDFT…NRFQ and LRKH…NLRS. The segment covering 142–151 has biased composition (low complexity); that stretch reads QGSSSGSQRG. Positions 152 to 181 are enriched in basic and acidic residues; sequence SGDERRQHRERRVHREEREQEQDSRSDSRR. The Cupin type-1 1 domain maps to 186-344; sequence YHFSSNRFQT…TFNTRYEEIE (159 aa). The segment covering 390–402 has biased composition (low complexity); the sequence is SSSGEGKPSESGP. The Cupin type-1 2 domain occupies 403-569; the sequence is FNLRSNKPIY…TFPGSIEDVE (167 aa). Asparagine 434 is a glycosylation site (N-linked (GlcNAc...) asparagine). Positions 476-495 are disordered; that stretch reads DQQRQQDEQEEEYEQGEEEV. The span at 483–492 shows a compositional bias: acidic residues; that stretch reads EQEEEYEQGE. N-linked (GlcNAc...) asparagine glycosylation is present at asparagine 519. Low complexity predominate over residues 580-589; the sequence is FANAQPQQQQ. The interval 580 to 600 is disordered; the sequence is FANAQPQQQQQREKEGRRGRR.

Belongs to the 7S seed storage protein family. Component of globulins complexes which accumulate in seeds.

Seed storage protein. Accumulates during seed development and is hydrolyzed after germination to provide a carbon and nitrogen source for the developing seedling. The polypeptide is Conglutin beta 1 (Lupinus angustifolius (Narrow-leaved blue lupine)).